Consider the following 193-residue polypeptide: ECF RNA polymerase sigma factor SigK (193 aa).

Residues Leu35–Glu101 form a sigma-70 factor domain-2 region. The Polymerase core binding motif lies at Glu59–Gln62. The sigma-70 factor domain-4 stretch occupies residues Met140 to Lys187. The H-T-H motif DNA-binding region spans Tyr161–Arg180.

It belongs to the sigma-70 factor family. ECF subfamily. As to quaternary structure, interacts transiently with the RNA polymerase catalytic core formed by RpoA, RpoB, RpoC and RpoZ (2 alpha, 1 beta, 1 beta' and 1 omega subunit) to form the RNA polymerase holoenzyme that can initiate transcription. Interacts (via sigma-70 factor domain 4) with anti-sigma-K factor RskA.

Functionally, sigma factors are initiation factors that promote the attachment of RNA polymerase to specific initiation sites and are then released. Extracytoplasmic function (ECF) sigma factors are held in an inactive form by an anti-sigma factor until released by regulated intramembrane proteolysis. This chain is ECF RNA polymerase sigma factor SigK (sigK), found in Mycobacterium sp. (strain KMS).